A 488-amino-acid polypeptide reads, in one-letter code: Proline--tRNA ligase (488 aa).

It belongs to the class-II aminoacyl-tRNA synthetase family. ProS type 3 subfamily. Homodimer.

It localises to the cytoplasm. It catalyses the reaction tRNA(Pro) + L-proline + ATP = L-prolyl-tRNA(Pro) + AMP + diphosphate. Catalyzes the attachment of proline to tRNA(Pro) in a two-step reaction: proline is first activated by ATP to form Pro-AMP and then transferred to the acceptor end of tRNA(Pro). This chain is Proline--tRNA ligase, found in Pyrobaculum arsenaticum (strain DSM 13514 / JCM 11321 / PZ6).